The following is a 138-amino-acid chain: MRTLWIVAVCLIGVEGSLLEFGMMILGETGKNPLTSYSFYGCYCGVGGKGTPKDATDRCCFVHDCCYGNLPDCSPKTDRYKYHRENGAIVCGKGTSCENRICECDRAAAICFRKNLKTYNHIYMYYPDFLCKKESEKC.

Residues 1 to 16 (MRTLWIVAVCLIGVEG) form the signal peptide. Disulfide bonds link Cys42/Cys131, Cys44/Cys60, Cys59/Cys111, Cys65/Cys138, Cys66/Cys104, Cys73/Cys97, and Cys91/Cys102. 3 residues coordinate Ca(2+): Tyr43, Gly45, and Gly47. His63 is a catalytic residue. Asp64 contacts Ca(2+). The active site involves Asp105.

The protein belongs to the phospholipase A2 family. Group II subfamily. D49 sub-subfamily. In terms of assembly, monomer. Binds to calmodulin, coagulation factor X (F10), M-type PLA2 receptor (R-180), 14-3-3 proteins gamma (YWHAG) and epsilon (YWHAE), and R25, a mitochondrial membrane protein. The cofactor is Ca(2+). Expressed by the venom gland.

Its subcellular location is the secreted. The protein resides in the host cytoplasm. It localises to the host cytosol. The enzyme catalyses a 1,2-diacyl-sn-glycero-3-phosphocholine + H2O = a 1-acyl-sn-glycero-3-phosphocholine + a fatty acid + H(+). Snake venom phospholipase A2 (PLA2) that acts as a presynaptic neurotoxin, an inhibitor of blood coagulation, and has been found to bind with high affinity to intracellular proteins. The response of indirectly stimulated neuromuscular preparations to ammodytoxin (Atx) is triphasic. The first phase, the transient inhibition of the acetylcholine (ACh) release, starts soon after the addition of Atx and lasts for several minutes. This phase is probably independent of Atx enzymatic activity. The effect may be due to the specific binding of the toxin to presynaptic receptors. These receptors, called N-type receptors, are still unidentified. It is noteworthy that a neuronal isoform of the M-type PLA2 receptor (R180) has been identified as a high-affinity receptor for Atx in neuronal plasma membranes. It was demonstrated however that this receptor is not essential for expression of neurotoxicity by Atx. The second phase corresponds to an augmentation of neurotransmitter release. A peak is reached 10-20 minutes after exposure of the preparation to Atx and is followed by a gradual reduction. In this phase, the enzymatic activity of Atx of the mammalian is not significant. It is speculated that the increased release of neurotransmitter in this phase is induced by the interference of Atx with voltage-gated potassium channels. Measurements of ionic currents showed however that voltage-gated potassium channels are not affected by Atx. The third phase of the response of neuromuscular preparations to Atx, which corresponds to a complete and irreversible paralysis, is clearly dependent on the hydrolytic activity of the toxin. In addition to its presynaptic neurotoxicity, Atx shows an anticoagulant activity by binding with high affinity to activated coagulation factor X (F10) thus inhibiting the formation of the prothrombinase complex (FX/FV) and its activity (IC(50) is 82 nM). Surprisingly, Atx was discovered to bind intracellular proteins such as calmodulin (CaM), 14-3-3 proteins gamma (YWHAG) and epsilon (YWHAE) (by similarity with AtxC), as well as R25 (by similarity with AtxC), a mitochondrial integral membrane protein found in cerebral cortex. These findings raised a doubt about the dogma of the exclusively extracellular action of PLA2s, defended by the potential instability of these molecules in the reducing environment of the eukaryotic cytosol coupled with their possible inability to act as enzymes in this cellular compartment, due to too low concentration of calcium ions. This hypothesis was challenged efficiently by demonstrating the internalization of AtxA into a culture cells, but still remains to be directly demonstrated in vivo. PLA2 catalyzes the calcium-dependent hydrolysis of the 2-acyl groups in 3-sn-phosphoglycerides. This chain is Basic phospholipase A2 ammodytoxin B, found in Vipera ammodytes ammodytes (Western sand viper).